The primary structure comprises 321 residues: N-acetyl-gamma-glutamyl-phosphate reductase (321 aa).

The active site involves Cys-131.

Belongs to the NAGSA dehydrogenase family. Type 1 subfamily.

It is found in the cytoplasm. The enzyme catalyses N-acetyl-L-glutamate 5-semialdehyde + phosphate + NADP(+) = N-acetyl-L-glutamyl 5-phosphate + NADPH + H(+). The protein operates within amino-acid biosynthesis; L-arginine biosynthesis; N(2)-acetyl-L-ornithine from L-glutamate: step 3/4. Catalyzes the NADPH-dependent reduction of N-acetyl-5-glutamyl phosphate to yield N-acetyl-L-glutamate 5-semialdehyde. In Christiangramia forsetii (strain DSM 17595 / CGMCC 1.15422 / KT0803) (Gramella forsetii), this protein is N-acetyl-gamma-glutamyl-phosphate reductase.